The sequence spans 156 residues: Small ribosomal subunit protein uS7 (156 aa).

This sequence belongs to the universal ribosomal protein uS7 family. As to quaternary structure, part of the 30S ribosomal subunit. Contacts proteins S9 and S11.

One of the primary rRNA binding proteins, it binds directly to 16S rRNA where it nucleates assembly of the head domain of the 30S subunit. Is located at the subunit interface close to the decoding center, probably blocks exit of the E-site tRNA. The sequence is that of Small ribosomal subunit protein uS7 from Kocuria rhizophila (strain ATCC 9341 / DSM 348 / NBRC 103217 / DC2201).